The sequence spans 362 residues: Probable dual-specificity RNA methyltransferase RlmN (362 aa).

Glutamate 105 acts as the Proton acceptor in catalysis. The Radical SAM core domain occupies 111–344; sequence HEYGNSICVT…VTIRREQGHD (234 aa). Residues cysteine 118 and cysteine 349 are joined by a disulfide bond. 3 residues coordinate [4Fe-4S] cluster: cysteine 125, cysteine 129, and cysteine 132. Residues 175–176, serine 207, 230–232, and asparagine 306 each bind S-adenosyl-L-methionine; these read GE and SLH. Cysteine 349 acts as the S-methylcysteine intermediate in catalysis.

Belongs to the radical SAM superfamily. RlmN family. It depends on [4Fe-4S] cluster as a cofactor.

The protein resides in the cytoplasm. It carries out the reaction adenosine(2503) in 23S rRNA + 2 reduced [2Fe-2S]-[ferredoxin] + 2 S-adenosyl-L-methionine = 2-methyladenosine(2503) in 23S rRNA + 5'-deoxyadenosine + L-methionine + 2 oxidized [2Fe-2S]-[ferredoxin] + S-adenosyl-L-homocysteine. The enzyme catalyses adenosine(37) in tRNA + 2 reduced [2Fe-2S]-[ferredoxin] + 2 S-adenosyl-L-methionine = 2-methyladenosine(37) in tRNA + 5'-deoxyadenosine + L-methionine + 2 oxidized [2Fe-2S]-[ferredoxin] + S-adenosyl-L-homocysteine. Functionally, specifically methylates position 2 of adenine 2503 in 23S rRNA and position 2 of adenine 37 in tRNAs. The polypeptide is Probable dual-specificity RNA methyltransferase RlmN (Bacillus mycoides (strain KBAB4) (Bacillus weihenstephanensis)).